An 899-amino-acid polypeptide reads, in one-letter code: Androgen receptor (899 aa).

Positions 1–537 are modulating; it reads MEVQLGLGRV…PIDYYFPPQK (537 aa). Positions 1 to 566 are interaction with ZNF318; sequence MEVQLGLGRV…GSCKVFFKRA (566 aa). 2 disordered regions span residues 35–146 and 175–222; these read QNPG…LSLL and QQQQ…LGGN. At S61 the chain carries Phosphoserine; by CDK9. At S75 the chain carries Phosphoserine. Low complexity-rich tracts occupy residues 94 to 103 and 175 to 193; these read QPSQQQAASE and QQQQ…QQQQ. Positions 210–222 are enriched in polar residues; sequence APSSSKDSYLGGN. Y218 is modified (phosphotyrosine; by CSK). S251 is modified (phosphoserine). Y262 carries the post-translational modification Phosphotyrosine; by CSK and TNK2. 4 positions are modified to phosphotyrosine; by CSK: Y302, Y341, Y352, and Y357. At Y358 the chain carries Phosphotyrosine; by CSK and TNK2. Residue K381 forms a Glycyl lysine isopeptide (Lys-Gly) (interchain with G-Cter in SUMO) linkage. Y388 is subject to Phosphotyrosine; by CSK. The segment at 436 to 471 is disordered; sequence EGQLYGPGGGGGSSSPSDAGPVAPYGYTRPPQGLTS. A Glycyl lysine isopeptide (Lys-Gly) (interchain with G-Cter in SUMO) cross-link involves residue K500. A phosphotyrosine; by CSK mark is found at Y514 and Y531. The interaction with LPXN stretch occupies residues 531–898; it reads YYFPPQKTCL…GKVKPIYFHT (368 aa). Positions 538-611 form a DNA-binding region, nuclear receptor; sequence TCLICGDEAS…AGMTLGARKL (74 aa). 2 consecutive NR C4-type zinc fingers follow at residues 539-559 and 575-599; these read CLIC…CGSC and CASR…LRKC. The segment at 551–641 is interaction with HIPK3; that stretch reads YGALTCGSCK…TEDPSQKMTV (91 aa). The interval 571 to 898 is interaction with CCAR1; it reads QKYLCASRND…GKVKPIYFHT (328 aa). Positions 604–898 are interaction with KAT7; the sequence is MTLGARKLKK…GKVKPIYFHT (295 aa). A Phosphoserine modification is found at S630. The NR LBD domain maps to 648-879; that stretch reads ECQPIFLNVL…DFPEMMAEII (232 aa). Residues N685 and R732 each contribute to the 17beta-hydroxy-5alpha-androstan-3-one site. Residues K825 and K827 each participate in a glycyl lysine isopeptide (Lys-Gly) (interchain with G-Cter in ubiquitin) cross-link. T857 lines the 17beta-hydroxy-5alpha-androstan-3-one pocket. A Phosphotyrosine; by CSK modification is found at Y895.

Belongs to the nuclear hormone receptor family. NR3 subfamily. Binds DNA as a homodimer. Part of a ternary complex containing AR, EFCAB6/DJBP and PARK7. Interacts with HIPK3 and NR0B2 in the presence of androgen. The ligand binding domain interacts with KAT7/HBO1 in the presence of dihydrotestosterone. Interacts with EFCAB6/DJBP, PQBP1, RANBP9, SPDEF, SRA1, TGFB1I1, ZNF318 and RREB1. The AR N-terminal poly-Gln region binds Ran resulting in enhancement of AR-mediated transactivation. Ran-binding decreases as the poly-Gln length increases. Interacts with ZMIZ1/ZIMP10 and ZMIZ2/ZMIP7 which both enhance its transactivation activity. Interacts with RBAK. Interacts via the ligand-binding domain with LXXLL and FXXLF motifs from NCOA1, NCOA2, NCOA3 and MAGEA11. Interacts (via nuclear receptor DNA binding domain and nuclear receptor ligand binding domain) with NCOA4. Interacts with HIP1 (via coiled coil domain). Interacts with SLC30A9 and RAD54L2/ARIP4. Interacts with MACROD1 (via macro domain). Interacts (via ligand-binding domain) with TRIM68. Interacts with TNK2. Interacts with USP26. Interacts with RNF6. Interacts (regulated by RNF6 probably through polyubiquitination) with RNF14; regulates AR transcriptional activity. Interacts with PRMT2 and TRIM24. Interacts with RACK1. Interacts with RANBP10; this interaction enhances hormone-induced AR transcriptional activity. Interacts with PRPF6 in a hormone-independent way; this interaction enhances hormone-induced AR transcriptional activity. Interacts with STK4/MST1. Interacts with ZIPK/DAPK3. Interacts with LPXN. Interacts with MAK. Part of a complex containing AR, MAK and NCOA3. Interacts with CRY1. Interacts with CCAR1 and GATA2. Interacts with BUD31. Interacts with ARID4A. Interacts with ARID4B. Interacts (via NR LBD domain) with ZBTB7A; the interaction is direct and androgen-dependent. Interacts with NCOR1. Interacts with NCOR2. Interacts with CRY2 in a ligand-dependent manner. In terms of processing, phosphorylated in prostate cancer cells in response to several growth factors including EGF. Phosphorylation is induced by c-Src kinase (CSK). Tyr-514 is one of the major phosphorylation sites and an increase in phosphorylation and Src kinase activity is associated with prostate cancer progression. Phosphorylation by TNK2 enhances the DNA-binding and transcriptional activity. Phosphorylation at Ser-61 by CDK9 regulates AR promoter selectivity and cell growth. Phosphorylation by PAK6 leads to AR-mediated transcription inhibition. Post-translationally, sumoylated on Lys-381 (major) and Lys-500. Ubiquitinated. Deubiquitinated by USP26. 'Lys-6' and 'Lys-27'-linked polyubiquitination by RNF6 modulates AR transcriptional activity and specificity. Palmitoylated by ZDHHC7 and ZDHHC21. Palmitoylation is required for plasma membrane targeting and for rapid intracellular signaling via ERK and AKT kinases and cAMP generation.

The protein resides in the nucleus. It localises to the cytoplasm. Steroid hormone receptors are ligand-activated transcription factors that regulate eukaryotic gene expression and affect cellular proliferation and differentiation in target tissues. Transcription factor activity is modulated by bound coactivator and corepressor proteins like ZBTB7A that recruits NCOR1 and NCOR2 to the androgen response elements/ARE on target genes, negatively regulating androgen receptor signaling and androgen-induced cell proliferation. Transcription activation is also down-regulated by NR0B2. Activated, but not phosphorylated, by HIPK3 and ZIPK/DAPK3. The protein is Androgen receptor (Ar) of Mus musculus (Mouse).